The primary structure comprises 822 residues: General transcription factor 3C polypeptide 4 (822 aa).

N-acetylmethionine is present on methionine 1. Residues 1–41 form a disordered region; sequence MNTADQARVGPADDGPAPSGEEEGEGGGEAGGKEPAADAAP. Residue serine 19 is modified to Phosphoserine. Residue lysine 225 forms a Glycyl lysine isopeptide (Lys-Gly) (interchain with G-Cter in SUMO2) linkage. Phosphoserine occurs at positions 604 and 611. The segment at 608–663 is disordered; sequence LVDSPGMGNADDEQQEEGTSSKQVVKQGLQERSKEGDVEEPTDDSLPTTGDAGGRE. Residue lysine 629 forms a Glycyl lysine isopeptide (Lys-Gly) (interchain with G-Cter in SUMO2) linkage. Phosphoserine is present on serine 652.

The protein belongs to the TFIIIC subunit 4 family. As to quaternary structure, part of the TFIIIC subcomplex TFIIIC2, consisting of six subunits, GTF3C1, GTF3C2, GTF3C3, GTF3C4, GTF3C5 and GTF3C6. Interacts with BRF1, GTF3C1, GTF3C2, GTF3C5, GTF3C6, POLR3C and POLR3F.

It is found in the nucleus. The enzyme catalyses L-lysyl-[protein] + acetyl-CoA = N(6)-acetyl-L-lysyl-[protein] + CoA + H(+). Functionally, essential for RNA polymerase III to make a number of small nuclear and cytoplasmic RNAs, including 5S RNA, tRNA, and adenovirus-associated (VA) RNA of both cellular and viral origin. Has histone acetyltransferase activity (HAT) with unique specificity for free and nucleosomal H3. May cooperate with GTF3C5 in facilitating the recruitment of TFIIIB and RNA polymerase through direct interactions with BRF1, POLR3C and POLR3F. May be localized close to the A box. The chain is General transcription factor 3C polypeptide 4 (GTF3C4) from Homo sapiens (Human).